The chain runs to 108 residues: Cell division protein FtsL (108 aa).

Over 1-24 the chain is Cytoplasmic; the sequence is MSKDTASQPSLTKLIGLDIFGVGR. A helical transmembrane segment spans residues 25–45; sequence LHAILLICIFLSAIGVVLATH. Residues 46–108 lie on the Periplasmic side of the membrane; the sequence is NTRQMTVQRE…PDKEVIIKLR (63 aa).

It belongs to the FtsL family. Part of a complex composed of FtsB, FtsL and FtsQ.

It localises to the cell inner membrane. Its function is as follows. Essential cell division protein. May link together the upstream cell division proteins, which are predominantly cytoplasmic, with the downstream cell division proteins, which are predominantly periplasmic. This Aliivibrio fischeri (strain ATCC 700601 / ES114) (Vibrio fischeri) protein is Cell division protein FtsL.